The sequence spans 128 residues: 2-iminobutanoate/2-iminopropanoate deaminase (128 aa).

It belongs to the RutC family.

It localises to the cytoplasm. It carries out the reaction 2-iminobutanoate + H2O = 2-oxobutanoate + NH4(+). It catalyses the reaction 2-iminopropanoate + H2O = pyruvate + NH4(+). Catalyzes the hydrolytic deamination of enamine/imine intermediates that form during the course of normal metabolism. May facilitate the release of ammonia from these potentially toxic reactive metabolites, reducing their impact on cellular components. It may act on enamine/imine intermediates formed by several types of pyridoxal-5'-phosphate-dependent dehydratases including L-threonine dehydratase. Preferentially digests Leu and Met in cooperation with L-amino acid oxidase, but digests Phe poorly. The sequence is that of 2-iminobutanoate/2-iminopropanoate deaminase from Dermatophagoides farinae (American house dust mite).